A 185-amino-acid chain; its full sequence is V-type proton ATPase subunit E (185 aa).

It belongs to the V-ATPase E subunit family.

Its function is as follows. Produces ATP from ADP in the presence of a proton gradient across the membrane. The sequence is that of V-type proton ATPase subunit E from Deinococcus deserti (strain DSM 17065 / CIP 109153 / LMG 22923 / VCD115).